Consider the following 142-residue polypeptide: ATP synthase epsilon chain (142 aa).

It belongs to the ATPase epsilon chain family. As to quaternary structure, F-type ATPases have 2 components, CF(1) - the catalytic core - and CF(0) - the membrane proton channel. CF(1) has five subunits: alpha(3), beta(3), gamma(1), delta(1), epsilon(1). CF(0) has three main subunits: a, b and c.

It is found in the cell inner membrane. Functionally, produces ATP from ADP in the presence of a proton gradient across the membrane. The sequence is that of ATP synthase epsilon chain from Shewanella oneidensis (strain ATCC 700550 / JCM 31522 / CIP 106686 / LMG 19005 / NCIMB 14063 / MR-1).